The chain runs to 126 residues: Histone H2B type 1-O (126 aa).

Low complexity predominate over residues 1 to 12 (MPDPAKSAPAPK). Positions 1 to 35 (MPDPAKSAPAPKKGSKKAVTKAQKKDGKKRKRSRK) are disordered. Pro-2 is subject to N-acetylproline; partial. At Lys-6 the chain carries N6-(2-hydroxyisobutyryl)lysine; alternate. At Lys-6 the chain carries N6-(beta-hydroxybutyryl)lysine; alternate. Lys-6 carries the post-translational modification N6-acetyllysine; alternate. An N6-butyryllysine; alternate modification is found at Lys-6. Lys-6 is subject to N6-crotonyllysine; alternate. Lys-6 carries the N6-lactoyllysine; alternate modification. Lys-6 participates in a covalent cross-link: Glycyl lysine isopeptide (Lys-Gly) (interchain with G-Cter in SUMO2); alternate. Ser-7 is modified (ADP-ribosylserine). Lys-12 is subject to N6-(beta-hydroxybutyryl)lysine; alternate. N6-acetyllysine; alternate occurs at positions 12 and 13. N6-crotonyllysine; alternate is present on residues Lys-12 and Lys-13. An N6-lactoyllysine; alternate modification is found at Lys-12. Residue Lys-13 is modified to N6-(2-hydroxyisobutyryl)lysine; alternate. Ser-15 carries the post-translational modification Phosphoserine; by STK4/MST1. 4 positions are modified to N6-acetyllysine; alternate: Lys-16, Lys-17, Lys-21, and Lys-24. 4 positions are modified to N6-crotonyllysine; alternate: Lys-16, Lys-17, Lys-21, and Lys-24. N6-lactoyllysine; alternate is present on residues Lys-16, Lys-17, Lys-21, and Lys-24. Residues Lys-17 and Lys-21 each carry the N6-(beta-hydroxybutyryl)lysine; alternate modification. An N6-glutaryllysine; alternate modification is found at Lys-17. N6-(2-hydroxyisobutyryl)lysine; alternate is present on residues Lys-21 and Lys-24. Lys-21 carries the post-translational modification N6-butyryllysine; alternate. Lys-21 participates in a covalent cross-link: Glycyl lysine isopeptide (Lys-Gly) (interchain with G-Cter in SUMO2); alternate. The residue at position 25 (Lys-25) is an N6-(2-hydroxyisobutyryl)lysine. The residue at position 35 (Lys-35) is an N6-(2-hydroxyisobutyryl)lysine; alternate. Lys-35 carries the N6-(beta-hydroxybutyryl)lysine; alternate modification. The residue at position 35 (Lys-35) is an N6-crotonyllysine; alternate. The residue at position 35 (Lys-35) is an N6-glutaryllysine; alternate. N6-succinyllysine; alternate is present on Lys-35. Lys-35 is covalently cross-linked (Glycyl lysine isopeptide (Lys-Gly) (interchain with G-Cter in ubiquitin); alternate). Glu-36 bears the PolyADP-ribosyl glutamic acid mark. Ser-37 is modified (phosphoserine; by AMPK). N6-(2-hydroxyisobutyryl)lysine; alternate occurs at positions 44, 47, and 58. Lys-44 carries the N6-lactoyllysine; alternate modification. N6-glutaryllysine; alternate occurs at positions 44 and 47. Lys-47 is subject to N6-methyllysine; alternate. Lys-58 carries the post-translational modification N6,N6-dimethyllysine; alternate. Position 80 is a dimethylated arginine (Arg-80). N6-(2-hydroxyisobutyryl)lysine; alternate is present on Lys-86. An N6-(beta-hydroxybutyryl)lysine; alternate modification is found at Lys-86. Lys-86 bears the N6-acetyllysine; alternate mark. An N6-lactoyllysine; alternate modification is found at Lys-86. The residue at position 86 (Lys-86) is an N6,N6,N6-trimethyllysine; alternate. Residues Arg-87 and Arg-93 each carry the omega-N-methylarginine modification. N6-(2-hydroxyisobutyryl)lysine; alternate is present on Lys-109. Lys-109 carries the post-translational modification N6-lactoyllysine; alternate. Lys-109 carries the post-translational modification N6-glutaryllysine; alternate. Lys-109 bears the N6-methyllysine; alternate mark. A glycan (O-linked (GlcNAc) serine) is linked at Ser-113. Position 116 is a phosphothreonine (Thr-116). N6-(2-hydroxyisobutyryl)lysine; alternate is present on residues Lys-117 and Lys-121. N6-(beta-hydroxybutyryl)lysine; alternate is present on residues Lys-117 and Lys-121. An N6-lactoyllysine; alternate mark is found at Lys-117 and Lys-121. An N6-glutaryllysine; alternate mark is found at Lys-117 and Lys-121. Residues Lys-117 and Lys-121 each carry the N6-succinyllysine; alternate modification. Lys-117 is modified (N6-malonyllysine; alternate). Lys-117 bears the N6-methylated lysine; alternate mark. Residue Lys-121 forms a Glycyl lysine isopeptide (Lys-Gly) (interchain with G-Cter in ubiquitin); alternate linkage.

This sequence belongs to the histone H2B family. In terms of assembly, the nucleosome is a histone octamer containing two molecules each of H2A, H2B, H3 and H4 assembled in one H3-H4 heterotetramer and two H2A-H2B heterodimers. The octamer wraps approximately 147 bp of DNA. Monoubiquitination at Lys-35 (H2BK34Ub) by the MSL1/MSL2 dimer is required for histone H3 'Lys-4' (H3K4me) and 'Lys-79' (H3K79me) methylation and transcription activation at specific gene loci, such as HOXA9 and MEIS1 loci. Similarly, monoubiquitination at Lys-121 (H2BK120Ub) by the RNF20/40 complex gives a specific tag for epigenetic transcriptional activation and is also prerequisite for histone H3 'Lys-4' and 'Lys-79' methylation. It also functions cooperatively with the FACT dimer to stimulate elongation by RNA polymerase II. H2BK120Ub also acts as a regulator of mRNA splicing: deubiquitination by USP49 is required for efficient cotranscriptional splicing of a large set of exons. Post-translationally, phosphorylation at Ser-37 (H2BS36ph) by AMPK in response to stress promotes transcription. Phosphorylated on Ser-15 (H2BS14ph) by STK4/MST1 during apoptosis; which facilitates apoptotic chromatin condensation. Also phosphorylated on Ser-15 in response to DNA double strand breaks (DSBs), and in correlation with somatic hypermutation and immunoglobulin class-switch recombination. In terms of processing, glcNAcylation at Ser-113 promotes monoubiquitination of Lys-121. It fluctuates in response to extracellular glucose, and associates with transcribed genes. ADP-ribosylated by PARP1 or PARP2 on Ser-7 (H2BS6ADPr) in response to DNA damage. H2BS6ADPr promotes recruitment of CHD1L. Poly ADP-ribosylation on Glu-36 (H2BE35ADPr) by PARP1 regulates adipogenesis: it inhibits phosphorylation at Ser-37 (H2BS36ph), thereby blocking expression of pro-adipogenetic genes. Post-translationally, crotonylation (Kcr) is specifically present in male germ cells and marks testis-specific genes in post-meiotic cells, including X-linked genes that escape sex chromosome inactivation in haploid cells. Crotonylation marks active promoters and enhancers and confers resistance to transcriptional repressors. It is also associated with post-meiotically activated genes on autosomes. In terms of processing, lactylated in macrophages by EP300/P300 by using lactoyl-CoA directly derived from endogenous or exogenous lactate, leading to stimulates gene transcription.

It is found in the nucleus. Its subcellular location is the chromosome. In terms of biological role, core component of nucleosome. Nucleosomes wrap and compact DNA into chromatin, limiting DNA accessibility to the cellular machineries which require DNA as a template. Histones thereby play a central role in transcription regulation, DNA repair, DNA replication and chromosomal stability. DNA accessibility is regulated via a complex set of post-translational modifications of histones, also called histone code, and nucleosome remodeling. The protein is Histone H2B type 1-O of Homo sapiens (Human).